The sequence spans 250 residues: ATP synthase subunit a (250 aa).

The next 6 helical transmembrane spans lie at 27-47 (FTNA…FLTF), 85-105 (FFPL…VGLI), 115-135 (LIVT…YGFV), 141-161 (FLHL…LVVI), 181-201 (MLAG…LASA), and 223-243 (ELLV…IYLN).

The protein belongs to the ATPase A chain family. As to quaternary structure, F-type ATPases have 2 components, CF(1) - the catalytic core - and CF(0) - the membrane proton channel. CF(1) has five subunits: alpha(3), beta(3), gamma(1), delta(1), epsilon(1). CF(0) has three main subunits: a(1), b(2) and c(9-12). The alpha and beta chains form an alternating ring which encloses part of the gamma chain. CF(1) is attached to CF(0) by a central stalk formed by the gamma and epsilon chains, while a peripheral stalk is formed by the delta and b chains.

The protein localises to the cell inner membrane. Functionally, key component of the proton channel; it plays a direct role in the translocation of protons across the membrane. The chain is ATP synthase subunit a from Xanthobacter autotrophicus (strain ATCC BAA-1158 / Py2).